Reading from the N-terminus, the 510-residue chain is MEIWKVIFSIWFLLFQNFVLSAKNDDNKLKVIRGRNVIYNGNVIPLSILIRNGKTIGIKDYSFNPKKLNENYEILYDDRECNNNEDFIIMGGLVDSHVHVNEPGRTEWEGFESATSAAAAGGVTTIVDMPLNSSPVTTSFKNLLDKIESMKGKLRVDVGLLGGIVPGNSKEIKKMVLQGGVLGFKSFLLPSGIDEFPPVNENDIQEAMNEMKLLKCQYNNSDVIMMFHAEVEEPIKEATVRLKNENADPKLYKTYLDSRPKISENQAISKLIDITRQNQIVSTHIVHLSSSESIEQIREAMDQGVPISAETTYNYLHLTSESVPYGNTLFKSAPPVREHENKELLWNAIINGTIKLIVSDHSPCTINLKQLKEDNQSIGDFLKAWGGISSLELGLPIIWTECKNRGIPITQLSEWLSNGPSKLVGLNDRKGSIEIGRDADFVIFNPNESFIVNEKKLFLKNKFSAYNGEKLFGVVYETILRGNSIFKKGDNKIKKIIGQRLIKSNLINKK.

Positions 97, 99, 185, 228, 287, and 360 each coordinate Zn(2+). At lysine 185 the chain carries N6-carboxylysine.

Belongs to the metallo-dependent hydrolases superfamily. Allantoinase family. As to quaternary structure, homotetramer. Zn(2+) is required as a cofactor. Carboxylation allows a single lysine to coordinate two zinc ions.

The enzyme catalyses (S)-allantoin + H2O = allantoate + H(+). Its pathway is nitrogen metabolism; (S)-allantoin degradation; allantoate from (S)-allantoin: step 1/1. In Dictyostelium discoideum (Social amoeba), this protein is Probable allantoinase 2 (allB2).